Here is a 124-residue protein sequence, read N- to C-terminus: Iron-sulfur cluster insertion protein ErpA (124 aa).

Residues C52, C116, and C118 each coordinate iron-sulfur cluster.

The protein belongs to the HesB/IscA family. In terms of assembly, homodimer. Iron-sulfur cluster serves as cofactor.

In terms of biological role, required for insertion of 4Fe-4S clusters for at least IspG. The chain is Iron-sulfur cluster insertion protein ErpA from Vibrio atlanticus (strain LGP32) (Vibrio splendidus (strain Mel32)).